The primary structure comprises 344 residues: Probable pectinesterase 67 (344 aa).

The signal sequence occupies residues 1–23; it reads MGHRTRMILVLTLVVMSIWGSDA. Asn43 and Asn151 each carry an N-linked (GlcNAc...) asparagine glycan. Gln152 provides a ligand contact to substrate. Catalysis depends on Asp196, which acts as the Nucleophile. Arg256 is a binding site for substrate. The N-linked (GlcNAc...) asparagine glycan is linked to Asn282.

It belongs to the pectinesterase family. As to expression, expressed in flower buds.

It localises to the secreted. Its subcellular location is the cell wall. It carries out the reaction [(1-&gt;4)-alpha-D-galacturonosyl methyl ester](n) + n H2O = [(1-&gt;4)-alpha-D-galacturonosyl](n) + n methanol + n H(+). It functions in the pathway glycan metabolism; pectin degradation; 2-dehydro-3-deoxy-D-gluconate from pectin: step 1/5. Acts in the modification of cell walls via demethylesterification of cell wall pectin. This is Probable pectinesterase 67 (PME67) from Arabidopsis thaliana (Mouse-ear cress).